Reading from the N-terminus, the 746-residue chain is MEHTYQYSWIIPFIPLPVPILLGVGLLLFPTATKNLRRIWTFLSIFLLSIVMIFSLYLSIQQIFISCIHQNVWSWTINNEFSFEFGYFIDPLTSIMSILITTVGILVLIYSDNYMSHDQGYLRFFAYMGFFNTSMLGLVTSSNLIQVYFFWELVGMCSYLLIGFWFTRPVAANACQKAFVTNRVGDFGLLLGILGLYWITGSFEFQDLFEIFNNLILNNRVNFFFFTLCGFLLFVGPIAKSAQFPLHVWLPDAMEGPTPISALIHAATMVAAGIFLVARLLPLFIVIPSIMYIISLIGIITVLLGATLALAQKDIKRGLAYSTMSQLGYMMLALGMGSYRSALFHLITHAYSKALLFLGSGSIIHSMEAIVGYSPDKSQNMILMGGLTKHVPITKTAFLIGTLSLCGIPPLACFWSKDEILNDSLLFSPIFAIIACSTAGLTAFYMFRIYLLTFEGHLNTYFLNYSGKKSRSFYSLSLWGKEEEKKLNKNFGLVPLLTMNNTKRSSFFCNKTYKISNNVRNKIFITVENFGLNTRTFYYPHESDNTILFPILILLLFTLFIGAIGIPFNQEGIDFDILSKLFTPSINLLHNNSQNFVDWYEFLRNATFSVSIAFFGIFIAYCLYKPFYSSLLNLTLLNSFQKWNSKRIRWEKLINFVYNWSYNRGYIDAFFKTYLIESIRGLAKQTNFVDKRIIDGITNGVGITSFFVGEVTKYIGGSRISSYLFFYLSYVLIFLLILFFFYFEKF.

The next 16 helical transmembrane spans lie at 9 to 29 (WIIP…LLLF), 39 to 59 (IWTF…LYLS), 89 to 109 (IDPL…LVLI), 125 to 145 (FAYM…SNLI), 147 to 167 (VYFF…FWFT), 185 to 205 (GDFG…SFEF), 221 to 241 (VNFF…IAKS), 258 to 278 (TPIS…FLVA), 280 to 300 (LLPL…IGII), 327 to 347 (LGYM…FHLI), 354 to 374 (ALLF…VGYS), 396 to 416 (TAFL…CFWS), 425 to 445 (LLFS…TAFY), 547 to 567 (ILFP…IGIP), 608 to 628 (FSVS…KPFY), and 723 to 743 (YLFF…FFYF).

The protein belongs to the complex I subunit 5 family. NDH is composed of at least 16 different subunits, 5 of which are encoded in the nucleus.

The protein localises to the plastid. Its subcellular location is the chloroplast thylakoid membrane. The catalysed reaction is a plastoquinone + NADH + (n+1) H(+)(in) = a plastoquinol + NAD(+) + n H(+)(out). It carries out the reaction a plastoquinone + NADPH + (n+1) H(+)(in) = a plastoquinol + NADP(+) + n H(+)(out). In terms of biological role, NDH shuttles electrons from NAD(P)H:plastoquinone, via FMN and iron-sulfur (Fe-S) centers, to quinones in the photosynthetic chain and possibly in a chloroplast respiratory chain. The immediate electron acceptor for the enzyme in this species is believed to be plastoquinone. Couples the redox reaction to proton translocation, and thus conserves the redox energy in a proton gradient. The protein is NAD(P)H-quinone oxidoreductase subunit 5, chloroplastic (ndhF) of Capsella bursa-pastoris (Shepherd's purse).